Consider the following 442-residue polypeptide: Mirror-image polydactyly gene 1 protein (442 aa).

The interval 1–39 is disordered; that stretch reads MENWSKDITHSYLEQETTGINKSTQPDEQLTMNSEKSMH. Over residues 12 to 35 the composition is skewed to polar residues; the sequence is YLEQETTGINKSTQPDEQLTMNSE. Coiled coils occupy residues 107 to 212 and 253 to 435; these read SDKE…LENI and ECKM…KVGT.

In terms of tissue distribution, expressed very weakly in heart, liver, skeletal muscle, kidney, pancreas and fetal kidney. Not detected in brain, placenta and lung.

This Homo sapiens (Human) protein is Mirror-image polydactyly gene 1 protein (MIPOL1).